Reading from the N-terminus, the 293-residue chain is 33 kDa chaperonin (293 aa).

2 cysteine pairs are disulfide-bonded: Cys-236–Cys-238 and Cys-269–Cys-272.

It belongs to the HSP33 family. Under oxidizing conditions two disulfide bonds are formed involving the reactive cysteines. Under reducing conditions zinc is bound to the reactive cysteines and the protein is inactive.

The protein resides in the cytoplasm. Functionally, redox regulated molecular chaperone. Protects both thermally unfolding and oxidatively damaged proteins from irreversible aggregation. Plays an important role in the bacterial defense system toward oxidative stress. The sequence is that of 33 kDa chaperonin from Lactobacillus delbrueckii subsp. bulgaricus (strain ATCC 11842 / DSM 20081 / BCRC 10696 / JCM 1002 / NBRC 13953 / NCIMB 11778 / NCTC 12712 / WDCM 00102 / Lb 14).